Here is a 325-residue protein sequence, read N- to C-terminus: Phenylalanine--tRNA ligase alpha subunit (325 aa).

E251 lines the Mg(2+) pocket.

It belongs to the class-II aminoacyl-tRNA synthetase family. Phe-tRNA synthetase alpha subunit type 1 subfamily. Tetramer of two alpha and two beta subunits. Mg(2+) serves as cofactor.

Its subcellular location is the cytoplasm. It catalyses the reaction tRNA(Phe) + L-phenylalanine + ATP = L-phenylalanyl-tRNA(Phe) + AMP + diphosphate + H(+). In Thermotoga neapolitana (strain ATCC 49049 / DSM 4359 / NBRC 107923 / NS-E), this protein is Phenylalanine--tRNA ligase alpha subunit.